A 115-amino-acid polypeptide reads, in one-letter code: Putative type I restriction enzyme MpnIIP endonuclease subunit middle part (115 aa).

The middle section of a putative type I restriction enzyme that if reconstituted might recognize 5'-GAN(7)TAY-3' and cleave a random distance away. Subunit R is required for both nuclease and ATPase activities, but not for modification. The polypeptide is Putative type I restriction enzyme MpnIIP endonuclease subunit middle part (Mycoplasma pneumoniae (strain ATCC 29342 / M129 / Subtype 1) (Mycoplasmoides pneumoniae)).